The following is a 444-amino-acid chain: Squalene synthase ERG9 (444 aa).

A helical membrane pass occupies residues 421 to 441 (FNMVLSIILSVLLGFYYIYTL).

It belongs to the phytoene/squalene synthase family. It depends on Mg(2+) as a cofactor.

The protein localises to the endoplasmic reticulum membrane. Its subcellular location is the microsome. It catalyses the reaction 2 (2E,6E)-farnesyl diphosphate + NADPH + H(+) = squalene + 2 diphosphate + NADP(+). The enzyme catalyses 2 (2E,6E)-farnesyl diphosphate + NADH + H(+) = squalene + 2 diphosphate + NAD(+). It participates in terpene metabolism; lanosterol biosynthesis; lanosterol from farnesyl diphosphate: step 1/3. Squalene synthase; part of the third module of ergosterol biosynthesis pathway that includes the late steps of the pathway. ERG9 produces squalene from 2 farnesyl pyrophosphate moieties. The third module or late pathway involves the ergosterol synthesis itself through consecutive reactions that mainly occur in the endoplasmic reticulum (ER) membrane. Firstly, the squalene synthase ERG9 catalyzes the condensation of 2 farnesyl pyrophosphate moieties to form squalene, which is the precursor of all steroids. Squalene synthase is crucial for balancing the incorporation of farnesyl diphosphate (FPP) into sterol and nonsterol isoprene synthesis. Secondly, the squalene epoxidase ERG1 catalyzes the stereospecific oxidation of squalene to (S)-2,3-epoxysqualene, which is considered to be a rate-limiting enzyme in steroid biosynthesis. Then, the lanosterol synthase ERG7 catalyzes the cyclization of (S)-2,3 oxidosqualene to lanosterol, a reaction that forms the sterol core. In the next steps, lanosterol is transformed to zymosterol through a complex process involving various demethylation, reduction and desaturation reactions. The lanosterol 14-alpha-demethylase ERG11 (also known as CYP51) catalyzes C14-demethylation of lanosterol to produce 4,4'-dimethyl cholesta-8,14,24-triene-3-beta-ol, which is critical for ergosterol biosynthesis. The C-14 reductase ERG24 reduces the C14=C15 double bond of 4,4-dimethyl-cholesta-8,14,24-trienol to produce 4,4-dimethyl-cholesta-8,24-dienol. 4,4-dimethyl-cholesta-8,24-dienol is substrate of the C-4 demethylation complex ERG25-ERG26-ERG27 in which ERG25 catalyzes the three-step monooxygenation required for the demethylation of 4,4-dimethyl and 4alpha-methylsterols, ERG26 catalyzes the oxidative decarboxylation that results in a reduction of the 3-beta-hydroxy group at the C-3 carbon to an oxo group, and ERG27 is responsible for the reduction of the keto group on the C-3. ERG28 has a role as a scaffold to help anchor ERG25, ERG26 and ERG27 to the endoplasmic reticulum and ERG29 regulates the activity of the iron-containing C4-methylsterol oxidase ERG25. Then, the sterol 24-C-methyltransferase ERG6 catalyzes the methyl transfer from S-adenosyl-methionine to the C-24 of zymosterol to form fecosterol. The C-8 sterol isomerase ERG2 catalyzes the reaction which results in unsaturation at C-7 in the B ring of sterols and thus converts fecosterol to episterol. The sterol-C5-desaturase ERG3 then catalyzes the introduction of a C-5 double bond in the B ring to produce 5-dehydroepisterol. The C-22 sterol desaturase ERG5 further converts 5-dehydroepisterol into ergosta-5,7,22,24(28)-tetraen-3beta-ol by forming the C-22(23) double bond in the sterol side chain. Finally, ergosta-5,7,22,24(28)-tetraen-3beta-ol is substrate of the C-24(28) sterol reductase ERG4 to produce ergosterol. This Saccharomyces cerevisiae (strain ATCC 204508 / S288c) (Baker's yeast) protein is Squalene synthase ERG9.